We begin with the raw amino-acid sequence, 451 residues long: Phosphoglucosamine mutase (451 aa).

The active-site Phosphoserine intermediate is serine 102. Residues serine 102, aspartate 242, aspartate 244, and aspartate 246 each contribute to the Mg(2+) site. Serine 102 carries the phosphoserine modification.

It belongs to the phosphohexose mutase family. Mg(2+) is required as a cofactor. In terms of processing, activated by phosphorylation.

It catalyses the reaction alpha-D-glucosamine 1-phosphate = D-glucosamine 6-phosphate. Functionally, catalyzes the conversion of glucosamine-6-phosphate to glucosamine-1-phosphate. The chain is Phosphoglucosamine mutase from Staphylococcus aureus (strain bovine RF122 / ET3-1).